The sequence spans 316 residues: Acetyl-coenzyme A carboxylase carboxyl transferase subunit beta (316 aa).

The CoA carboxyltransferase N-terminal domain occupies 39–308 (LWHKCSKCGV…TPPMVLWETM (270 aa)). Residues Cys-43, Cys-46, Cys-62, and Cys-65 each coordinate Zn(2+). A C4-type zinc finger spans residues 43 to 65 (CSKCGVLTYTKDLRANQMVCVEC).

The protein belongs to the AccD/PCCB family. Acetyl-CoA carboxylase is a heterohexamer composed of biotin carboxyl carrier protein (AccB), biotin carboxylase (AccC) and two subunits each of ACCase subunit alpha (AccA) and ACCase subunit beta (AccD). Requires Zn(2+) as cofactor.

The protein resides in the cytoplasm. It carries out the reaction N(6)-carboxybiotinyl-L-lysyl-[protein] + acetyl-CoA = N(6)-biotinyl-L-lysyl-[protein] + malonyl-CoA. It functions in the pathway lipid metabolism; malonyl-CoA biosynthesis; malonyl-CoA from acetyl-CoA: step 1/1. In terms of biological role, component of the acetyl coenzyme A carboxylase (ACC) complex. Biotin carboxylase (BC) catalyzes the carboxylation of biotin on its carrier protein (BCCP) and then the CO(2) group is transferred by the transcarboxylase to acetyl-CoA to form malonyl-CoA. The protein is Acetyl-coenzyme A carboxylase carboxyl transferase subunit beta of Nostoc sp. (strain PCC 7120 / SAG 25.82 / UTEX 2576).